We begin with the raw amino-acid sequence, 748 residues long: Transcription factor hmgR (748 aa).

A DNA-binding region (zn(2)-C6 fungal-type) is located at residues 24-59; that stretch reads CISCRQRKAKCDLGTGPDGLPLGPPCAKCRREQKPC. 2 disordered regions span residues 108–142 and 661–683; these read SQED…QIDL and REST…DEHA.

It is found in the nucleus. Functionally, transcription factor; part of the L-tyrosine degradation gene cluster that mediates the biosynthesis of the brownish pigment pyomelanin as an alternative melanin. Acts as a transcriptional activator for the genes of the tyrosine degradation cluster. This chain is Transcription factor hmgR, found in Aspergillus fumigatus (strain ATCC MYA-4609 / CBS 101355 / FGSC A1100 / Af293) (Neosartorya fumigata).